Reading from the N-terminus, the 364-residue chain is Glycerol dehydrogenase (364 aa).

NAD(+)-binding residues include D37, G92, K93, T114, and S117. D119 is a binding site for glycerol. S123, L125, and Y129 together coordinate NAD(+). 3 residues coordinate glycerol: D169, H252, and H269. The Zn(2+) site is built by D169, H252, and H269.

It belongs to the iron-containing alcohol dehydrogenase family. Zn(2+) serves as cofactor.

The catalysed reaction is glycerol + NAD(+) = dihydroxyacetone + NADH + H(+). It participates in polyol metabolism; glycerol fermentation; glycerone phosphate from glycerol (oxidative route): step 1/2. In terms of biological role, catalyzes the NAD-dependent oxidation of glycerol to dihydroxyacetone (glycerone). The protein is Glycerol dehydrogenase (gldA) of Thermotoga maritima (strain ATCC 43589 / DSM 3109 / JCM 10099 / NBRC 100826 / MSB8).